The sequence spans 342 residues: MKNITIAIDAMGGDHGLEIVIPACIRAIKNNPDLKLLLVGVQDKISASLKKHGMLSCQQFTIVHASEVVTMDELPSHALRNKKDSSMRIAINLVKEGRAQACVSAGNTGALMATARYVLKTLPGIDRPAIVSELPTMGGKTRVIDLGANVDSCAEHLFQFAVMGSALIQAIENKPKPKIGLLNIGVEEIKGNDQVKRTAHMLAECSVMNYVGYVEGDHFYSGDVDLVVCDGFVGNVALKASEGLAKLLLTVLKESFSRNWLTKIAGLIALPALKHLKNRLDPSRYNGASLLGLNGIVVKSHGGANEVGFQHAIEQAVLEVKNNVVDLVRDQINDFINQGLLL.

Belongs to the PlsX family. Homodimer. Probably interacts with PlsY.

It localises to the cytoplasm. The enzyme catalyses a fatty acyl-[ACP] + phosphate = an acyl phosphate + holo-[ACP]. The protein operates within lipid metabolism; phospholipid metabolism. Catalyzes the reversible formation of acyl-phosphate (acyl-PO(4)) from acyl-[acyl-carrier-protein] (acyl-ACP). This enzyme utilizes acyl-ACP as fatty acyl donor, but not acyl-CoA. The chain is Phosphate acyltransferase from Legionella pneumophila (strain Paris).